The sequence spans 604 residues: Choline transporter-like protein 3 (604 aa).

2 N-linked (GlcNAc...) asparagine glycosylation sites follow: Asn90 and Asn103. Helical transmembrane passes span 165-185, 195-215, 237-257, 286-306, and 330-350; these read DTILGLCAFVFALSLAMLFTF, IIISLVILGLLFVCGVFWWLY, LAFAVITTVVTVVLLALIFTL, LWTFAILVFFWVLWVAVLLSL, and YLWWYHLIGLIWTSEFILTCQ. Residues Asn454 and Asn472 are each glycosylated (N-linked (GlcNAc...) asparagine). 2 helical membrane passes run 485 to 505 and 514 to 534; these read FIIFLGKVLVVCFSVFGGLMA and VWAIPLLLVAFFAYLAAHSFL. Over residues 581–592 the composition is skewed to polar residues; the sequence is NARSQGHKNSLP. Positions 581–604 are disordered; sequence NARSQGHKNSLPNEEGTELRPIVR.

It belongs to the CTL (choline transporter-like) family. Expressed in colon, kidney and ileum.

It localises to the membrane. This chain is Choline transporter-like protein 3 (Slc44a3), found in Rattus norvegicus (Rat).